The following is a 271-amino-acid chain: Aquaporin-2 (271 aa).

Residues 1–11 (MWELRSIAFSR) lie on the Cytoplasmic side of the membrane. A helical transmembrane segment spans residues 12–32 (AVLAEFLATLLFVFFGLGSAL). The Extracellular portion of the chain corresponds to 33-40 (QWASSPPS). A helical membrane pass occupies residues 41–59 (VLQIAVAFGLGIGILVQAL). At 60–64 (GHVSG) the chain is on the cytoplasmic side. Positions 65–74 (AHINPAVTVA) form an intramembrane region, discontinuously helical. The NPA 1 motif lies at 68–70 (NPA). Residues 75–85 (CLVGCHVSFLR) are Cytoplasmic-facing. Residues 86–107 (AAFYVAAQLLGAVAGAAILHEI) form a helical membrane-spanning segment. The Extracellular portion of the chain corresponds to 108-127 (TPVEIRGDLAVNALHNNATA). N-linked (GlcNAc...) asparagine glycosylation is present at Asn-124. Residues 128 to 148 (GQAVTVELFLTMQLVLCIFAS) traverse the membrane as a helical segment. Residues 149–156 (TDERRGDN) are Cytoplasmic-facing. A helical membrane pass occupies residues 157–176 (LGSPALSIGFSVTLGHLLGI). Residues 177 to 180 (YFTG) are Extracellular-facing. Positions 181–193 (CSMNPARSLAPAV) form an intramembrane region, discontinuously helical. Positions 184–186 (NPA) match the NPA 2 motif. Over 194 to 201 (VTGKFDDH) the chain is Extracellular. Residues 202–222 (WVFWIGPLVGAIIGSLLYNYL) form a helical membrane-spanning segment. Residues 223–271 (LFPSAKSLQERLAVLKGLEPDTDWEEREVRRRQSVELHSPQSLPRGSKA) are Cytoplasmic-facing. The disordered stretch occupies residues 251-271 (VRRRQSVELHSPQSLPRGSKA). A phosphoserine mark is found at Ser-256, Ser-261, Ser-264, and Ser-269. Residues 261 to 271 (SPQSLPRGSKA) show a composition bias toward polar residues.

Belongs to the MIP/aquaporin (TC 1.A.8) family. Homotetramer. Ser-256 phosphorylation is necessary and sufficient for expression at the apical membrane. Endocytosis is not phosphorylation-dependent. In terms of processing, N-glycosylated. Detected in kidney, in cortical and the medullary collecting tubules (at protein level). Detected in kidney medulla and cortex.

It is found in the apical cell membrane. The protein localises to the basolateral cell membrane. The protein resides in the cell membrane. It localises to the cytoplasmic vesicle membrane. Its subcellular location is the golgi apparatus. It is found in the trans-Golgi network membrane. It catalyses the reaction H2O(in) = H2O(out). The enzyme catalyses glycerol(in) = glycerol(out). Its function is as follows. Forms a water-specific channel that provides the plasma membranes of renal collecting duct with high permeability to water, thereby permitting water to move in the direction of an osmotic gradient. Plays an essential role in renal water homeostasis. Could also be permeable to glycerol. The protein is Aquaporin-2 of Rattus norvegicus (Rat).